A 188-amino-acid polypeptide reads, in one-letter code: dCTP deaminase (188 aa).

Residues 111 to 116 (KSTYAR), 135 to 137 (TLE), glutamine 156, tyrosine 170, and glutamine 180 contribute to the dCTP site. Catalysis depends on glutamate 137, which acts as the Proton donor/acceptor.

This sequence belongs to the dCTP deaminase family. In terms of assembly, homotrimer.

The catalysed reaction is dCTP + H2O + H(+) = dUTP + NH4(+). The protein operates within pyrimidine metabolism; dUMP biosynthesis; dUMP from dCTP (dUTP route): step 1/2. Functionally, catalyzes the deamination of dCTP to dUTP. This is dCTP deaminase from Cupriavidus necator (strain ATCC 17699 / DSM 428 / KCTC 22496 / NCIMB 10442 / H16 / Stanier 337) (Ralstonia eutropha).